Reading from the N-terminus, the 363-residue chain is 3-dehydroquinate synthase (363 aa).

NAD(+) contacts are provided by residues Thr134–Thr135, Lys147, and Lys156. 3 residues coordinate Zn(2+): Glu189, His254, and His271.

It belongs to the sugar phosphate cyclases superfamily. Dehydroquinate synthase family. The cofactor is Co(2+). Zn(2+) serves as cofactor. It depends on NAD(+) as a cofactor.

It is found in the cytoplasm. The catalysed reaction is 7-phospho-2-dehydro-3-deoxy-D-arabino-heptonate = 3-dehydroquinate + phosphate. It functions in the pathway metabolic intermediate biosynthesis; chorismate biosynthesis; chorismate from D-erythrose 4-phosphate and phosphoenolpyruvate: step 2/7. Its function is as follows. Catalyzes the conversion of 3-deoxy-D-arabino-heptulosonate 7-phosphate (DAHP) to dehydroquinate (DHQ). The chain is 3-dehydroquinate synthase from Prochlorococcus marinus (strain MIT 9215).